A 361-amino-acid polypeptide reads, in one-letter code: Dihydroorotate dehydrogenase (quinone) (361 aa).

Residues 69–73 (AGFDK) and threonine 93 contribute to the FMN site. Substrate is bound at residue lysine 73. 118 to 122 (NRLGF) serves as a coordination point for substrate. Positions 147 and 180 each coordinate FMN. Substrate is bound at residue asparagine 180. The active-site Nucleophile is the serine 183. Asparagine 185 contributes to the substrate binding site. FMN-binding residues include lysine 221 and threonine 249. Substrate is bound at residue 250–251 (NT). Residues glycine 271, glycine 300, and 321 to 322 (YT) each bind FMN.

Belongs to the dihydroorotate dehydrogenase family. Type 2 subfamily. Monomer. The cofactor is FMN.

It is found in the cell membrane. The catalysed reaction is (S)-dihydroorotate + a quinone = orotate + a quinol. The protein operates within pyrimidine metabolism; UMP biosynthesis via de novo pathway; orotate from (S)-dihydroorotate (quinone route): step 1/1. Catalyzes the conversion of dihydroorotate to orotate with quinone as electron acceptor. The polypeptide is Dihydroorotate dehydrogenase (quinone) (Roseiflexus sp. (strain RS-1)).